Reading from the N-terminus, the 388-residue chain is Diacylglycerol O-acyltransferase 2 (388 aa).

Residues 1-69 (MKTLIAAYSG…NRSKVEKHLQ (69 aa)) are Cytoplasmic-facing. A helical membrane pass occupies residues 70–88 (VISVLQWVLSFLVLGVACS). Over 89–92 (VILM) the chain is Lumenal. The helical transmembrane segment at 93–112 (YTFCTDCWLIAALYFTWLAF) threads the bilayer. Over 113–388 (DWNTPKKGGR…LPETEVLEVN (276 aa)) the chain is Cytoplasmic.

The protein belongs to the diacylglycerol acyltransferase family. In terms of assembly, forms multimeric complexes consisting of several DGAT2 subunits. Interacts with SLC27A1 and this interaction is enhanced in the presence of ZFYVE1.

It is found in the endoplasmic reticulum membrane. The protein resides in the lipid droplet. It localises to the cytoplasm. Its subcellular location is the perinuclear region. It catalyses the reaction an acyl-CoA + a 1,2-diacyl-sn-glycerol = a triacyl-sn-glycerol + CoA. The enzyme catalyses all-trans-retinol + an acyl-CoA = an all-trans-retinyl ester + CoA. The catalysed reaction is 2-(9Z-octadecenoyl)-glycerol + (9Z)-octadecenoyl-CoA = 1,2-di-(9Z-octadecenoyl)-sn-glycerol + CoA. It carries out the reaction 1,2-di-(9Z-octadecenoyl)-sn-glycerol + (9Z)-octadecenoyl-CoA = 1,2,3-tri-(9Z-octadecenoyl)-glycerol + CoA. It catalyses the reaction all-trans-retinol + hexadecanoyl-CoA = all-trans-retinyl hexadecanoate + CoA. The enzyme catalyses 1-O-(9Z-octadecenyl)-glycerol + (9Z)-octadecenoyl-CoA = 1-O-(9Z-octadecyl)-3-(9Z-octadecenoyl)-glycerol + CoA. The catalysed reaction is 1-(9Z-octadecenoyl)-glycerol + (9Z)-octadecenoyl-CoA = 1,2-di-(9Z-octadecenoyl)-glycerol + CoA. It carries out the reaction 1,2-di-(9Z-octadecenoyl)-sn-glycerol + hexadecanoyl-CoA = 1,2-di-(9Z)-octadecenoyl-3-hexadecanoyl-sn-glycerol + CoA. It catalyses the reaction 1,3-di-(9Z-octadecenoyl)-glycerol + (9Z)-octadecenoyl-CoA = 1,2,3-tri-(9Z-octadecenoyl)-glycerol + CoA. The enzyme catalyses 2,3-di-(9Z)-octadecenoyl-sn-glycerol + (9Z)-octadecenoyl-CoA = 1,2,3-tri-(9Z-octadecenoyl)-glycerol + CoA. The catalysed reaction is 2-(9Z-octadecenoyl)-glycerol + hexadecanoyl-CoA = 1-hexadecanoyl-2-(9Z-octadecenoyl)-sn-glycerol + CoA. It participates in glycerolipid metabolism; triacylglycerol biosynthesis. With respect to regulation, inhibited by niacin. Functionally, essential acyltransferase that catalyzes the terminal and only committed step in triacylglycerol synthesis by using diacylglycerol and fatty acyl CoA as substrates. Required for synthesis and storage of intracellular triglycerides. Probably plays a central role in cytosolic lipid accumulation. In liver, is primarily responsible for incorporating endogenously synthesized fatty acids into triglycerides. Also functions as an acyl-CoA retinol acyltransferase (ARAT). Also able to use 1-monoalkylglycerol (1-MAkG) as an acyl acceptor for the synthesis of monoalkyl-monoacylglycerol (MAMAG). This chain is Diacylglycerol O-acyltransferase 2, found in Rattus norvegicus (Rat).